We begin with the raw amino-acid sequence, 604 residues long: Threonine--tRNA ligase (604 aa).

The tract at residues 210-501 is catalytic; the sequence is DHRKIGTEME…LTEHYAGEFP (292 aa). Cysteine 302, histidine 353, and histidine 478 together coordinate Zn(2+).

Belongs to the class-II aminoacyl-tRNA synthetase family. Homodimer. It depends on Zn(2+) as a cofactor.

It is found in the cytoplasm. It catalyses the reaction tRNA(Thr) + L-threonine + ATP = L-threonyl-tRNA(Thr) + AMP + diphosphate + H(+). Functionally, catalyzes the attachment of threonine to tRNA(Thr) in a two-step reaction: L-threonine is first activated by ATP to form Thr-AMP and then transferred to the acceptor end of tRNA(Thr). Also edits incorrectly charged L-seryl-tRNA(Thr). The protein is Threonine--tRNA ligase of Sulfurovum sp. (strain NBC37-1).